Reading from the N-terminus, the 906-residue chain is Ankyrin repeat and MYND domain-containing protein 1 (906 aa).

3 MORN repeats span residues Tyr16–Ser38, Phe39–Met59, and Phe61–Gln83. One copy of the ANK 1 repeat lies at Lys282 to Lys311. The span at Ser391–Met400 shows a compositional bias: polar residues. The segment at Ser391–Thr411 is disordered. 6 ANK repeats span residues Val479 to Leu508, Val511 to Ile540, Gln547 to Ala579, Gly623 to Val657, Ser660 to Leu689, and Val701 to Asn732. 8 residues coordinate Zn(2+): Cys845, Cys848, Cys859, Cys862, Cys868, Cys872, His881, and Cys885. The segment at Cys845 to Cys885 adopts an MYND-type zinc-finger fold.

The protein is Ankyrin repeat and MYND domain-containing protein 1 (Ankmy1) of Mus musculus (Mouse).